We begin with the raw amino-acid sequence, 160 residues long: Biogenesis of lysosome-related organelles complex 1 subunit 5 (160 aa).

This sequence belongs to the BLOC1S5 family. In terms of assembly, component of the biogenesis of lysosome-related organelles complex-1 (BLOC-1) composed of Blos1, Blos2, Blos3, Blos4, Dysb, Muted, Pldn and Snapin.

Its function is as follows. Component of the biogenesis of lysosome-related organelles complex-1 (BLOC-1) involved in pigment granule biogenesis. The protein is Biogenesis of lysosome-related organelles complex 1 subunit 5 of Drosophila melanogaster (Fruit fly).